A 141-amino-acid polypeptide reads, in one-letter code: Endoribonuclease YbeY (141 aa).

Zn(2+) is bound by residues H105, H109, and D115.

The protein belongs to the endoribonuclease YbeY family. Requires Zn(2+) as cofactor.

It is found in the cytoplasm. Its function is as follows. Single strand-specific metallo-endoribonuclease involved in late-stage 70S ribosome quality control and in maturation of the 3' terminus of the 16S rRNA. In Karelsulcia muelleri (strain GWSS) (Sulcia muelleri), this protein is Endoribonuclease YbeY.